A 602-amino-acid chain; its full sequence is Glutathione-regulated potassium-efflux system protein KefB (602 aa).

A run of 13 helical transmembrane segments spans residues 4-24, 29-49, 55-75, 87-107, 115-135, 152-172, 181-201, 207-227, 230-250, 261-281, 296-318, 326-346, and 356-376; these read TGLLTAVLVFLFAAVVAVPIA, IGAVLGYLIAGIAIGPWGLGF, EILHFSELGVVFLMFIIGLEL, IFGVGAGQVVITAAVLGALLY, AAVIGGVGLAMSSTAMALQLM, VLLFQDMAVIPALALIPILAG, VKIGLKIAAFAGMLIGGRYLL, YIVASGVREVFTAAALLVVLG, LFMDALGLSMALGTFIAGILL, IAIEPFKGLLLGLFFISVGMA, LGVLALVFIKSAILYGLARVFGL, FAGVLSQGGEFAFVLFSAAFS, and ALLLVVVTLSMMTTPLLMQVI. An RCK N-terminal domain is found at 400–519; sequence DPQVIIVGFG…NGVKDFTRET (120 aa).

The protein belongs to the monovalent cation:proton antiporter 2 (CPA2) transporter (TC 2.A.37) family. KefB subfamily. Interacts with the regulatory subunit KefG.

It is found in the cell inner membrane. Its function is as follows. Pore-forming subunit of a potassium efflux system that confers protection against electrophiles. Catalyzes K(+)/H(+) antiport. This Yersinia pestis bv. Antiqua (strain Antiqua) protein is Glutathione-regulated potassium-efflux system protein KefB.